We begin with the raw amino-acid sequence, 564 residues long: Urocanate hydratase (564 aa).

NAD(+) is bound by residues 58–59 (GG), Gln136, 182–184 (GMG), Glu202, Arg207, 245–246 (NA), 266–270 (QTSAH), 276–277 (YL), and Tyr325. Cys413 is a catalytic residue. An NAD(+)-binding site is contributed by Gly495.

The protein belongs to the urocanase family. It depends on NAD(+) as a cofactor.

It is found in the cytoplasm. The catalysed reaction is 4-imidazolone-5-propanoate = trans-urocanate + H2O. The protein operates within amino-acid degradation; L-histidine degradation into L-glutamate; N-formimidoyl-L-glutamate from L-histidine: step 2/3. In terms of biological role, catalyzes the conversion of urocanate to 4-imidazolone-5-propionate. This chain is Urocanate hydratase, found in Vibrio atlanticus (strain LGP32) (Vibrio splendidus (strain Mel32)).